A 210-amino-acid polypeptide reads, in one-letter code: Putative cutinase (210 aa).

Over residues 26–38 (DSERLPLKRDEPG) the composition is skewed to basic and acidic residues. Residues 26–58 (DSERLPLKRDEPGSRSMRSTFIPSSQCSNLSSA) form a disordered region. A compositionally biased stretch (low complexity) spans 49-58 (SSQCSNLSSA).

It catalyses the reaction cutin + H2O = cutin monomers.. The chain is Putative cutinase from Phytophthora capsici.